The sequence spans 334 residues: Adenosine deaminase (334 aa).

2 residues coordinate Zn(2+): His16 and His18. Substrate contacts are provided by His18, Asp20, and Gly173. His200 serves as a coordination point for Zn(2+). Glu203 (proton donor) is an active-site residue. Asp281 contributes to the Zn(2+) binding site.

The protein belongs to the metallo-dependent hydrolases superfamily. Adenosine and AMP deaminases family. Adenosine deaminase subfamily. It depends on Zn(2+) as a cofactor.

The enzyme catalyses adenosine + H2O + H(+) = inosine + NH4(+). The catalysed reaction is 2'-deoxyadenosine + H2O + H(+) = 2'-deoxyinosine + NH4(+). In terms of biological role, catalyzes the hydrolytic deamination of adenosine and 2-deoxyadenosine. The protein is Adenosine deaminase of Clostridium acetobutylicum (strain ATCC 824 / DSM 792 / JCM 1419 / IAM 19013 / LMG 5710 / NBRC 13948 / NRRL B-527 / VKM B-1787 / 2291 / W).